The primary structure comprises 231 residues: Monothiol glutaredoxin-6 (231 aa).

The N-terminal stretch at 1 to 29 is a signal peptide; it reads MIPSNKRNARILSITTLLLLLVFFVAQNA. One can recognise a Glutaredoxin domain in the interval 116-219; it reads QKEYSLILDL…ESLQVWSDGK (104 aa). Residue Cys-136 coordinates [2Fe-2S] cluster.

This sequence belongs to the glutaredoxin family. Monothiol subfamily.

The protein localises to the vacuole. The polypeptide is Monothiol glutaredoxin-6 (GRX6) (Saccharomyces cerevisiae (strain ATCC 204508 / S288c) (Baker's yeast)).